The chain runs to 284 residues: MEAIKNKMQAMKLEKDNAIDRAEIAEQKARDANLRAEKSEEEVRALQKKIQQIENELDQVQEQLSAANTKLEEKEKALQTAEGDVAALNRRIQLIEEDLERSEERLKIATAKLEEASQSADESERMRKMLEHRSITDEERMEGLENQLKEARMMAEDADRKYDEVARKLAMVEADLERAEERAETGESKIVELEEELRVVGNNLKSLEVSEEKAQQREEAHEQQIRIMTTKLKEAEARAEFAERSVQKLQKEVGRLEDELVHEKEKYKSISDELDQTFAELTGY.

Residues 1–284 (MEAIKNKMQA…DQTFAELTGY (284 aa)) are a coiled coil.

This sequence belongs to the tropomyosin family. As to quaternary structure, homodimer.

Its function is as follows. Tropomyosin, in association with the troponin complex, plays a central role in the calcium dependent regulation of muscle contraction. In Dermatophagoides pteronyssinus (European house dust mite), this protein is Tropomyosin.